A 361-amino-acid polypeptide reads, in one-letter code: MSQNSLRLVEDNSVDKTKALDAALSQIERAFGKGSIMRLGQNDQVVEIETVSTGSLSLDIALGVGGLPKGRIVEIYGPESSGKTTLALHTIAEAQKKGGICAFVDAEHALDPVYARKLGVDLENLLISQPDTGEQALEITDTLVRSGAIDVLVVDSVAALTPRAEIEGEMGDSLPGLQARLMSQALRKLTGSISRSNCMVIFINQIRMKIGVMFGSPETTTGGNALKFYASVRLDIRRIGSIKERDEVMGNQTRVKVVKNKLAPPFKQVEFDIMYGAGVSKVGELVDLGVKAGVVEKSGAWFSYNSQRLGQGRENAKQYLKDNPEVAREIETTLRQNAGLIAEQFLDDGGPEEDAAGAAEM.

77 to 84 (GPESSGKT) lines the ATP pocket.

Belongs to the RecA family.

The protein localises to the cytoplasm. Functionally, can catalyze the hydrolysis of ATP in the presence of single-stranded DNA, the ATP-dependent uptake of single-stranded DNA by duplex DNA, and the ATP-dependent hybridization of homologous single-stranded DNAs. It interacts with LexA causing its activation and leading to its autocatalytic cleavage. This chain is Protein RecA, found in Brucella suis (strain ATCC 23445 / NCTC 10510).